Consider the following 117-residue polypeptide: Prefoldin subunit beta (117 aa).

It belongs to the prefoldin subunit beta family. Heterohexamer of two alpha and four beta subunits.

The protein localises to the cytoplasm. In terms of biological role, molecular chaperone capable of stabilizing a range of proteins. Seems to fulfill an ATP-independent, HSP70-like function in archaeal de novo protein folding. In Methanosarcina mazei (strain ATCC BAA-159 / DSM 3647 / Goe1 / Go1 / JCM 11833 / OCM 88) (Methanosarcina frisia), this protein is Prefoldin subunit beta.